Reading from the N-terminus, the 301-residue chain is Acetylglutamate kinase (301 aa).

Residues 72–73, Arg-94, and Asn-199 each bind substrate; that span reads GG.

This sequence belongs to the acetylglutamate kinase family. ArgB subfamily.

The protein resides in the cytoplasm. It catalyses the reaction N-acetyl-L-glutamate + ATP = N-acetyl-L-glutamyl 5-phosphate + ADP. It participates in amino-acid biosynthesis; L-arginine biosynthesis; N(2)-acetyl-L-ornithine from L-glutamate: step 2/4. Catalyzes the ATP-dependent phosphorylation of N-acetyl-L-glutamate. The protein is Acetylglutamate kinase of Bartonella henselae (strain ATCC 49882 / DSM 28221 / CCUG 30454 / Houston 1) (Rochalimaea henselae).